Consider the following 652-residue polypeptide: Zinc finger protein 432 (652 aa).

The KRAB domain maps to 8–79; it reads LTLEDVTVEF…EDERHSRICP (72 aa). 3'-nitrotyrosine is present on Y41. An ADP-ribosylserine mark is found at S139 and S164. 16 consecutive C2H2-type zinc fingers follow at residues 205–227, 233–255, 261–283, 289–311, 317–339, 345–367, 373–395, 401–423, 429–451, 457–479, 485–507, 513–535, 541–563, 567–591, 597–619, and 625–647; these read HVCS…ERVH, YGCT…QRIH, FICS…QRTH, YICN…QRNH, YICS…QRTH, YICS…QRNH, YICN…QRTH, YLCS…QRTH, YTCS…QRTH, YRCS…QRTH, FMCS…QQIH, KSCI…KQVH, YGCN…QRTH, and FVCS…QRTH. An ADP-ribosylserine modification is found at S246. S330 is modified (ADP-ribosylserine). S414 is modified (ADP-ribosylserine).

Belongs to the krueppel C2H2-type zinc-finger protein family. In terms of assembly, interacts with PARP1 and several chromatin remodeling proteins; the interaction with PARP1 reshapes ZNF432 interacting proteins. Interacts with TRIM28; the interaction is independent of PARP1.

The protein localises to the nucleus. Functionally, homologous recombination repressor that functions as a poly(ADP-ribose) (PAR) reader regulating DNA damage response and PARP inhibition. Once recruited to DNA lesions via DNA-, in a PAR-dependent mechanism, stimulates PARP1 activity. Binds preferentially ssDNA and inhibits EXO1-mediated resection, probably through a PAR-independent DNA-binding mechanism. This Homo sapiens (Human) protein is Zinc finger protein 432.